Consider the following 594-residue polypeptide: Elongation factor 4 (594 aa).

Residues 2–184 (KNIRNFSIIA…TIVAKVPAPE (183 aa)) form the tr-type G domain. Residues 14 to 19 (DHGKST) and 131 to 134 (NKID) contribute to the GTP site.

It belongs to the TRAFAC class translation factor GTPase superfamily. Classic translation factor GTPase family. LepA subfamily.

The protein localises to the cell inner membrane. The enzyme catalyses GTP + H2O = GDP + phosphate + H(+). Its function is as follows. Required for accurate and efficient protein synthesis under certain stress conditions. May act as a fidelity factor of the translation reaction, by catalyzing a one-codon backward translocation of tRNAs on improperly translocated ribosomes. Back-translocation proceeds from a post-translocation (POST) complex to a pre-translocation (PRE) complex, thus giving elongation factor G a second chance to translocate the tRNAs correctly. Binds to ribosomes in a GTP-dependent manner. This is Elongation factor 4 from Francisella tularensis subsp. tularensis (strain FSC 198).